Here is a 149-residue protein sequence, read N- to C-terminus: Calmodulin (149 aa).

N-acetylalanine is present on Ala-2. EF-hand domains follow at residues 8–43 (EQIA…LGQN), 44–79 (PTEA…KMKD), 81–116 (DTEE…LGEK), and 117–149 (LTDE…MMAK). 14 residues coordinate Ca(2+): Asp-21, Asp-23, Asp-25, Thr-27, Glu-32, Asp-57, Asp-59, Asn-61, Thr-63, Glu-68, Asp-94, Asp-96, Asn-98, and Glu-105. Lys-116 carries the post-translational modification N6,N6,N6-trimethyllysine. Residues Asp-130, Asp-132, Asp-134, Gln-136, and Glu-141 each contribute to the Ca(2+) site.

Belongs to the calmodulin family.

Functionally, calmodulin mediates the control of a large number of enzymes, ion channels and other proteins by Ca(2+). Among the enzymes to be stimulated by the calmodulin-Ca(2+) complex are a number of protein kinases and phosphatases. The protein is Calmodulin of Heterocapsa triquetra (Dinoflagellate).